The sequence spans 346 residues: Leucine zipper protein 2 (346 aa).

The first 19 residues, 1-19, serve as a signal peptide directing secretion; the sequence is MKFSPAHYLLPLLPALVLS. The stretch at 16–211 forms a coiled coil; sequence LVLSTRQDYE…QMKAMKETVQ (196 aa). A glycan (N-linked (GlcNAc...) asparagine) is linked at asparagine 133. The segment at 164-192 is leucine-zipper; it reads LRYGKKDLLFKAQQLTDLEQKLAVAKNEL. 2 disordered regions span residues 221–240 and 248–346; these read QPPPPLSLITSNPTRMLLPP and PDAA…EKIL. The span at 250–261 shows a compositional bias: low complexity; sequence AAAKSKPQQSAS. Residues 262-283 are compositionally biased toward polar residues; the sequence is GNNESSQVESTKEGNPSTTACD. Asparagine 264 carries N-linked (GlcNAc...) asparagine glycosylation. Positions 286–298 are enriched in basic and acidic residues; it reads DEGRPCSMKHKES. N-linked (GlcNAc...) asparagine glycosylation occurs at asparagine 302.

The protein resides in the secreted. In Homo sapiens (Human), this protein is Leucine zipper protein 2 (LUZP2).